We begin with the raw amino-acid sequence, 195 residues long: Small ribosomal subunit protein uS4B (195 aa).

The region spanning 107–181 is the S4 RNA-binding domain; it reads RRLQTQVYKL…VARRNAARKA (75 aa). Positions 161-195 are disordered; that stretch reads TSPFGGARPGRVARRNAARKAEASGEAAEEAEDEE. K180 participates in a covalent cross-link: Glycyl lysine isopeptide (Lys-Gly) (interchain with G-Cter in ubiquitin). S184 carries the phosphoserine modification.

This sequence belongs to the universal ribosomal protein uS4 family. As to quaternary structure, component of the small ribosomal subunit (SSU). Mature yeast ribosomes consist of a small (40S) and a large (60S) subunit. The 40S small subunit contains 1 molecule of ribosomal RNA (18S rRNA) and 33 different proteins (encoded by 57 genes). The large 60S subunit contains 3 rRNA molecules (25S, 5.8S and 5S rRNA) and 46 different proteins (encoded by 81 genes). Interacts with snoRNA U3. uS11 interacts with MPP10. Component of the ribosomal small subunit (SSU) processome composed of at least 40 protein subunits and snoRNA U3.

The protein resides in the cytoplasm. The protein localises to the nucleus. It localises to the nucleolus. Its function is as follows. Component of the ribosome, a large ribonucleoprotein complex responsible for the synthesis of proteins in the cell. The small ribosomal subunit (SSU) binds messenger RNAs (mRNAs) and translates the encoded message by selecting cognate aminoacyl-transfer RNA (tRNA) molecules. The large subunit (LSU) contains the ribosomal catalytic site termed the peptidyl transferase center (PTC), which catalyzes the formation of peptide bonds, thereby polymerizing the amino acids delivered by tRNAs into a polypeptide chain. The nascent polypeptides leave the ribosome through a tunnel in the LSU and interact with protein factors that function in enzymatic processing, targeting, and the membrane insertion of nascent chains at the exit of the ribosomal tunnel. uS4 is involved in nucleolar processing of pre-18S ribosomal RNA and ribosome assembly. The chain is Small ribosomal subunit protein uS4B from Saccharomyces cerevisiae (strain ATCC 204508 / S288c) (Baker's yeast).